We begin with the raw amino-acid sequence, 74 residues long: Pelophylaxin-2 (74 aa).

The N-terminal stretch at 1 to 22 (MFTMKKSLLFFFFLGTIALSLC) is a signal peptide. Positions 23–42 (EEERGADEEENGAEITDEEV) are excised as a propeptide. A disulfide bridge links Cys-68 with Cys-74.

As to expression, expressed by the skin glands.

It localises to the secreted. In terms of biological role, antimicrobial peptide. This is Pelophylaxin-2 from Pelophylax fukienensis (Fukien gold-striped pond frog).